Consider the following 340-residue polypeptide: GTPase Obg (340 aa).

The Obg domain occupies 1-161 (MKFVDMTNIT…QHLLLELLLI (161 aa)). The OBG-type G domain maps to 162–335 (ANVGIFGLPN…LCNSIMKFIM (174 aa)). GTP is bound by residues 168–175 (GLPNSGKS), 193–197 (FTTLV), 215–218 (DIPG), 285–288 (NKID), and 316–318 (SSI). 2 residues coordinate Mg(2+): Ser175 and Thr195.

This sequence belongs to the TRAFAC class OBG-HflX-like GTPase superfamily. OBG GTPase family. In terms of assembly, monomer. Mg(2+) is required as a cofactor.

Its subcellular location is the cytoplasm. Functionally, an essential GTPase which binds GTP, GDP and possibly (p)ppGpp with moderate affinity, with high nucleotide exchange rates and a fairly low GTP hydrolysis rate. Plays a role in control of the cell cycle, stress response, ribosome biogenesis and in those bacteria that undergo differentiation, in morphogenesis control. The protein is GTPase Obg of Blochmanniella pennsylvanica (strain BPEN).